The sequence spans 232 residues: Large ribosomal subunit protein uL1 (232 aa).

This sequence belongs to the universal ribosomal protein uL1 family. As to quaternary structure, part of the 50S ribosomal subunit.

Its function is as follows. Binds directly to 23S rRNA. The L1 stalk is quite mobile in the ribosome, and is involved in E site tRNA release. Protein L1 is also a translational repressor protein, it controls the translation of the L11 operon by binding to its mRNA. This chain is Large ribosomal subunit protein uL1, found in Roseobacter denitrificans (strain ATCC 33942 / OCh 114) (Erythrobacter sp. (strain OCh 114)).